The sequence spans 298 residues: Enoyl-CoA hydratase AFT6-1 (298 aa).

The tract at residues 1-39 is disordered; it reads MTYSTTKSVAMNPDEDAPPSDINSSGRLMSHSEVEPRGN.

The protein belongs to the enoyl-CoA hydratase/isomerase family.

The enzyme catalyses a (3S)-3-hydroxyacyl-CoA = a (2E)-enoyl-CoA + H2O. The catalysed reaction is a 4-saturated-(3S)-3-hydroxyacyl-CoA = a (3E)-enoyl-CoA + H2O. The protein operates within mycotoxin biosynthesis. Functionally, enoyl-CoA hydratase; part of the gene clusters that mediate the biosynthesis of the host-selective toxins (HSTs) AF-toxins responsible for Alternaria black spot of strawberry disease by the strawberry pathotype. AF-toxin I and III are valine derivatives of 2,3-dyhydroxy-isovaleric acid and 2-hydroxy-isovaleric acid respectively, while AF II is an isoleucine derivative of 2-hydroxy-valeric acid. These derivatives are bound to a 9,10-epoxy-8-hydroxy-9-methyl-decatrienoic acid (EDA) moiety. On cellular level, AF-toxin affects plasma membrane of susceptible cells and cause a sudden increase in loss of K(+) after a few minutes of toxin treatment. The aldo-keto reductase AFTS1 catalyzes the conversion of 2-keto-isovaleric acid (2-KIV) to 2-hydroxy-isovaleric acid (2-HIV) by reduction of its ketone to an alcohol. The acyl-CoA ligase AFT1, the hydrolase AFT2 and the enoyl-CoA hydratases AFT3 and AFT6, but also the polyketide synthase AFT9, the acyl-CoA dehydrogenase AFT10, the cytochrome P450 monooxygenase AFT11 and the oxidoreductase AFT12 are all involved in the biosynthesis of the AK-, AF- and ACT-toxin common EDA structural moiety. The exact function of each enzyme, and of additional enzymes identified within the AF-toxin clusters have still to be determined. The sequence is that of Enoyl-CoA hydratase AFT6-1 from Alternaria alternata (Alternaria rot fungus).